Here is a 674-residue protein sequence, read N- to C-terminus: Protein tesmin/TSO1-like CXC 2 (674 aa).

Polar residues-rich tracts occupy residues 1 to 16 and 76 to 89; these read MDTP…TPIS and THNS…NSVE. 2 disordered regions span residues 1-20 and 69-113; these read MDTP…KSRF and KESR…GLNI. A compositionally biased stretch (basic and acidic residues) spans 95-109; that stretch reads STSHEEVPAEGEDTK. A CRC domain is found at 373-498; sequence SCKRCNCKKS…RCEGCKNAFG (126 aa). 2 disordered regions span residues 504–529 and 623–655; these read SIDM…SQQN and IPNI…RRNG. The span at 507 to 516 shows a compositional bias: acidic residues; it reads MEAEQEEENE.

It belongs to the lin-54 family. As to expression, ubiquitous but expressed mostly in all the aerial organs with highest expression in flowers.

Its subcellular location is the nucleus. In terms of biological role, plays a role in development of both male and female reproductive tissues. The sequence is that of Protein tesmin/TSO1-like CXC 2 (TCX2) from Arabidopsis thaliana (Mouse-ear cress).